We begin with the raw amino-acid sequence, 269 residues long: Phosphonoacetaldehyde hydrolase (269 aa).

Catalysis depends on D10, which acts as the Nucleophile. Mg(2+) contacts are provided by D10 and A12. K52 (schiff-base intermediate with substrate) is an active-site residue. D186 is a Mg(2+) binding site.

The protein belongs to the HAD-like hydrolase superfamily. PhnX family. As to quaternary structure, homodimer. It depends on Mg(2+) as a cofactor.

The enzyme catalyses phosphonoacetaldehyde + H2O = acetaldehyde + phosphate + H(+). Involved in phosphonate degradation. This chain is Phosphonoacetaldehyde hydrolase (phnX), found in Salmonella typhimurium (strain LT2 / SGSC1412 / ATCC 700720).